Consider the following 456-residue polypeptide: Keratin, type I cuticular Ha8 (456 aa).

Positions 1-104 (MTSSYSSSSC…YGENTLNGHE (104 aa)) are head. Residues 104-415 (EKETMQFLND…NLLESEDCKL (312 aa)) enclose the IF rod domain. Residues 105–139 (KETMQFLNDRLANYLEKVRQLEQENAELEATLLER) are coil 1A. The segment at 140–150 (SKCHESTVCPD) is linker 1. The tract at residues 151–251 (YQSYFHTIEE…HEQEVKILRS (101 aa)) is coil 1B. Residues 252 to 267 (QLGEKLRIELDIEPTI) form a linker 12 region. The coil 2 stretch occupies residues 268-411 (DLNRVLGEMR…ATYRNLLESE (144 aa)). The tract at residues 412 to 456 (DCKLPCNPCSTSPSCVTAPCAPRPSCGPCTTCGPTCGASTTGSRF) is tail.

The protein belongs to the intermediate filament family.

The sequence is that of Keratin, type I cuticular Ha8 (KRT38) from Homo sapiens (Human).